The primary structure comprises 412 residues: Polyferredoxin protein MvhB (412 aa).

4Fe-4S ferredoxin-type domains lie at 2–29, 30–57, 67–96, 97–127, 138–166, 168–197, 207–236, 238–266, 276–305, 314–345, 357–386, and 385–412; these read IIVN…VTPE, DVIY…LEDL, GRIV…LDEG, KVKK…VEGI, EGPI…LDKV, GVIE…ISGR, KKFE…PRTS, LTVE…LEVE, EGLV…VVTK, EKVD…LVDM, KRVQ…LTDE, and DEKV…LSLK. [4Fe-4S] cluster contacts are provided by C9, C12, C15, and C19. C76, C79, C82, C86, C107, C110, C113, C117, C146, C149, C152, C156, C177, C180, C183, C187, C216, C219, C222, C226, C246, C249, C252, and C256 together coordinate [4Fe-4S] cluster. Residues C325, C328, C331, C335, C366, C369, C372, C376, C394, C397, C400, and C404 each contribute to the [4Fe-4S] cluster site.

The cofactor is [4Fe-4S] cluster.

The chain is Polyferredoxin protein MvhB (mvhB) from Methanothermobacter thermautotrophicus (strain ATCC 29096 / DSM 1053 / JCM 10044 / NBRC 100330 / Delta H) (Methanobacterium thermoautotrophicum).